The sequence spans 342 residues: Inositol-tetrakisphosphate 1-kinase 5 (342 aa).

Positions 25 and 67 each coordinate 1D-myo-inositol 1,3,4-trisphosphate. Arg102 and Lys154 together coordinate ATP. Residues His165 and Lys197 each contribute to the 1D-myo-inositol 1,3,4-trisphosphate site. ATP is bound by residues 186 to 197 (QEFVNHGGVIFK) and Ser212. Positions 283, 298, and 300 each coordinate Mg(2+). Asn300 contacts 1D-myo-inositol 1,3,4-trisphosphate.

It belongs to the ITPK1 family. As to quaternary structure, monomer. Mg(2+) is required as a cofactor. In terms of tissue distribution, expressed in roots, leaves, flowers, anthers and embryos.

It catalyses the reaction 1D-myo-inositol 3,4,5,6-tetrakisphosphate + ATP = 1D-myo-inositol 1,3,4,5,6-pentakisphosphate + ADP + H(+). The catalysed reaction is 1D-myo-inositol 1,3,4-trisphosphate + ATP = 1D-myo-inositol 1,3,4,5-tetrakisphosphate + ADP + H(+). It carries out the reaction 1D-myo-inositol 1,3,4-trisphosphate + ATP = 1D-myo-inositol 1,3,4,6-tetrakisphosphate + ADP + H(+). Its function is as follows. Kinase that can phosphorylate various inositol polyphosphate such as Ins(3,4,5,6)P4 or Ins(1,3,4)P3 and participates in phytic acid biosynthesis in developing seeds. Phytic acid is the primary storage form of phosphorus in cereal grains and other plant seeds. In Oryza sativa subsp. japonica (Rice), this protein is Inositol-tetrakisphosphate 1-kinase 5 (ITPK5).